The following is a 38-amino-acid chain: QQVPGZKETKIKVPIAMFGGSGNYAXALYIAAVKXNAV.

It belongs to the ATPase delta chain family. In terms of assembly, F-type ATPases have 2 components, CF(1) - the catalytic core - and CF(0) - the membrane proton channel. CF(1) has five subunits: alpha(3), beta(3), gamma(1), delta(1), epsilon(1). CF(0) has three main subunits: a, b and c.

The protein localises to the mitochondrion. It localises to the mitochondrion inner membrane. Mitochondrial membrane ATP synthase (F(1)F(0) ATP synthase or Complex V) produces ATP from ADP in the presence of a proton gradient across the membrane which is generated by electron transport complexes of the respiratory chain. F-type ATPases consist of two structural domains, F(1) - containing the extramembraneous catalytic core and F(0) - containing the membrane proton channel, linked together by a central stalk and a peripheral stalk. During catalysis, ATP synthesis in the catalytic domain of F(1) is coupled via a rotary mechanism of the central stalk subunits to proton translocation. Part of the complex F(0) domain and the peripheric stalk, which acts as a stator to hold the catalytic alpha(3)beta(3) subcomplex and subunit a/ATP6 static relative to the rotary elements. This chain is ATP synthase subunit O, mitochondrial, found in Pisum sativum (Garden pea).